The chain runs to 178 residues: ADP-ribosylation factor-like protein 5 (178 aa).

Gly-2 carries the N-myristoyl glycine lipid modification. Residues 24 to 31, 67 to 71, and 126 to 129 contribute to the GTP site; these read GLDNAGKT, DIGGQ, and NKQD.

Belongs to the small GTPase superfamily. Arf family.

It is found in the golgi apparatus. In terms of biological role, GTP-binding protein that may be involved in protein trafficking; may modulate vesicle budding and uncoating within the Golgi apparatus. Plays a role in the shedding of pathogen spores from intestinal cells. The chain is ADP-ribosylation factor-like protein 5 (arl-5) from Caenorhabditis elegans.